Consider the following 55-residue polypeptide: KNTGRRPNYRECEMRDGECNAKVAKTAEPDSKTNTTGNNSFAIKTSTLLLAVLLF.

A glycan (N-linked (GlcNAc...) asparagine) is linked at asparagine 34. Asparagine 38 is lipidated: GPI-anchor amidated asparagine. Positions asparagine 39–phenylalanine 55 are cleaved as a propeptide — removed in mature form.

It is found in the cell membrane. Functionally, VSG forms a coat on the surface of the parasite. The trypanosome evades the immune response of the host by expressing a series of antigenically distinct VSGs from an estimated 1000 VSG genes. In Trypanosoma brucei rhodesiense, this protein is Variant surface glycoprotein ETAT 1.2.